A 132-amino-acid chain; its full sequence is Fumarate reductase subunit C (132 aa).

3 helical membrane passes run 36 to 56, 70 to 90, and 110 to 130; these read AIPT…LGSL, IVII…VTYY, and IITM…LVFM.

This sequence belongs to the FrdC family. Part of an enzyme complex containing four subunits: a flavoprotein (FrdA), an iron-sulfur protein (FrdB), and two hydrophobic anchor proteins (FrdC and FrdD).

The protein localises to the cell inner membrane. In terms of biological role, anchors the catalytic components of the fumarate reductase complex to the cell membrane, binds quinones. The protein is Fumarate reductase subunit C of Pasteurella multocida (strain Pm70).